A 193-amino-acid chain; its full sequence is uncharacterized protein (193 aa).

This is an uncharacterized protein from Aquifex aeolicus (strain VF5).